The primary structure comprises 473 residues: ATP synthase subunit beta (473 aa).

158-165 lines the ATP pocket; sequence GGAGVGKT.

It belongs to the ATPase alpha/beta chains family. In terms of assembly, F-type ATPases have 2 components, CF(1) - the catalytic core - and CF(0) - the membrane proton channel. CF(1) has five subunits: alpha(3), beta(3), gamma(1), delta(1), epsilon(1). CF(0) has three main subunits: a(1), b(2) and c(9-12). The alpha and beta chains form an alternating ring which encloses part of the gamma chain. CF(1) is attached to CF(0) by a central stalk formed by the gamma and epsilon chains, while a peripheral stalk is formed by the delta and b chains.

Its subcellular location is the cell membrane. The catalysed reaction is ATP + H2O + 4 H(+)(in) = ADP + phosphate + 5 H(+)(out). In terms of biological role, produces ATP from ADP in the presence of a proton gradient across the membrane. The catalytic sites are hosted primarily by the beta subunits. This chain is ATP synthase subunit beta, found in Geobacillus thermodenitrificans (strain NG80-2).